A 345-amino-acid polypeptide reads, in one-letter code: Phenylalanine--tRNA ligase alpha subunit (345 aa).

E272 lines the Mg(2+) pocket.

Belongs to the class-II aminoacyl-tRNA synthetase family. Phe-tRNA synthetase alpha subunit type 1 subfamily. As to quaternary structure, tetramer of two alpha and two beta subunits. The cofactor is Mg(2+).

The protein localises to the cytoplasm. It catalyses the reaction tRNA(Phe) + L-phenylalanine + ATP = L-phenylalanyl-tRNA(Phe) + AMP + diphosphate + H(+). This chain is Phenylalanine--tRNA ligase alpha subunit, found in Prochlorococcus marinus (strain MIT 9312).